The following is a 329-amino-acid chain: Acetoacetyl CoA synthase NphT7 (329 aa).

Catalysis depends on residues Cys115, His256, and Asn286.

The protein belongs to the thiolase-like superfamily. FabH family. Homodimer.

It localises to the cytoplasm. The enzyme catalyses malonyl-CoA + acetyl-CoA + H(+) = acetoacetyl-CoA + CO2 + CoA. It functions in the pathway metabolic intermediate biosynthesis; (R)-mevalonate biosynthesis. Catalyzes the condensation of acetyl-CoA and malonyl-CoA to form acetoacetyl-CoA and CoA. Does not accept malonyl-[acyl-carrier-protein] as a substrate. Can also convert malonyl-CoA into acetyl-CoA via decarboxylation of malonyl-CoA. This chain is Acetoacetyl CoA synthase NphT7 (nphT7), found in Streptomyces sp. (strain CL190).